The chain runs to 180 residues: Large ribosomal subunit protein uL5c (180 aa).

The protein belongs to the universal ribosomal protein uL5 family. In terms of assembly, part of the 50S ribosomal subunit; contacts the 5S rRNA.

The protein resides in the plastid. It localises to the chloroplast. In terms of biological role, binds 5S rRNA, forms part of the central protuberance of the 50S subunit. The protein is Large ribosomal subunit protein uL5c (rpl5) of Tupiella akineta (Green alga).